Consider the following 657-residue polypeptide: Acetyl-coenzyme A synthetase (657 aa).

CoA-binding positions include 192–195 (RRGK) and T311. ATP contacts are provided by residues 387–389 (GEP), 411–416 (DTWWQT), D504, R519, and R530. Residues H543 and V546 each coordinate Mg(2+). R592 contributes to the CoA binding site. N6-acetyllysine is present on K617.

It belongs to the ATP-dependent AMP-binding enzyme family. Mg(2+) is required as a cofactor. In terms of processing, acetylated. Deacetylation by the SIR2-homolog deacetylase activates the enzyme.

It catalyses the reaction acetate + ATP + CoA = acetyl-CoA + AMP + diphosphate. In terms of biological role, catalyzes the conversion of acetate into acetyl-CoA (AcCoA), an essential intermediate at the junction of anabolic and catabolic pathways. AcsA undergoes a two-step reaction. In the first half reaction, AcsA combines acetate with ATP to form acetyl-adenylate (AcAMP) intermediate. In the second half reaction, it can then transfer the acetyl group from AcAMP to the sulfhydryl group of CoA, forming the product AcCoA. In Campylobacter jejuni subsp. jejuni serotype O:2 (strain ATCC 700819 / NCTC 11168), this protein is Acetyl-coenzyme A synthetase.